Here is a 396-residue protein sequence, read N- to C-terminus: MAKSKFERTKPHINVGTIGHVDHGKTTLTAAITMVLAKKFGGEAKSYAQIDSAPEEKARGITINTSHVEYETEKRHYAHVDCPGHADYVKNMITGAAQMDGAILVVSAADGPMPQTREHILLARQVGVPYIIVYMNKADMVDDAELLELVEMEVRELLSKYNFPGDDTPIVIGSALKALEGDQSDIGEPSIYKLAAALDSYIPEPQRAVDGAFLMPVEDVFSISGRGTVVTGRVERGVIKVGEDIEIVGLKPTTKTVCTGVEMFRKLLDQGQAGDNVGVLLRGTKREEVERGQVLAKPGTITPHTKFTAEIYVLSKEEGGRHTPFFQGYRPQFYFRTTDVTGAIELPAGTEMVMPGDNVSVTVNLIAPIAMEEGLRFAIREGGRTVGAGVVAKIIE.

The 197-residue stretch at 10-206 folds into the tr-type G domain; it reads KPHINVGTIG…ALDSYIPEPQ (197 aa). The G1 stretch occupies residues 19 to 26; sequence GHVDHGKT. Position 19–26 (19–26) interacts with GTP; sequence GHVDHGKT. Threonine 26 serves as a coordination point for Mg(2+). A G2 region spans residues 60 to 64; it reads GITIN. The segment at 81–84 is G3; the sequence is DCPG. Residues 81-85 and 136-139 each bind GTP; these read DCPGH and NKAD. A G4 region spans residues 136-139; that stretch reads NKAD. The interval 174–176 is G5; that stretch reads SAL.

It belongs to the TRAFAC class translation factor GTPase superfamily. Classic translation factor GTPase family. EF-Tu/EF-1A subfamily. As to quaternary structure, monomer.

It is found in the cytoplasm. It carries out the reaction GTP + H2O = GDP + phosphate + H(+). GTP hydrolase that promotes the GTP-dependent binding of aminoacyl-tRNA to the A-site of ribosomes during protein biosynthesis. The chain is Elongation factor Tu from Nitrosospira multiformis (strain ATCC 25196 / NCIMB 11849 / C 71).